The following is a 253-amino-acid chain: MRFDVITLFPEFFATPLRIGLVGKALEQGIAEVHCTNPRDFATDKHRRVDDEPYGGGVGMVLKPEPFFAAVASLPRLDPCEIILLTPQGQPLNQALLQELAQKAQLILLCGQYEGFDERIRQHLATREVSLGDFVLTGGEIPALALINGVVRLLPGTVGKIDSLRSESFETGLLEYPQYTRPPEFQGHKVPPVLLSGDHRAIARWRLQQQLVRTWRRRPDLLAKRPLTPEEQQLLAEGLAEQHTDVEEQDRCL.

S-adenosyl-L-methionine contacts are provided by residues Gly-111 and Leu-131–Leu-136.

It belongs to the RNA methyltransferase TrmD family. Homodimer.

It is found in the cytoplasm. It catalyses the reaction guanosine(37) in tRNA + S-adenosyl-L-methionine = N(1)-methylguanosine(37) in tRNA + S-adenosyl-L-homocysteine + H(+). In terms of biological role, specifically methylates guanosine-37 in various tRNAs. The protein is tRNA (guanine-N(1)-)-methyltransferase of Synechococcus sp. (strain JA-3-3Ab) (Cyanobacteria bacterium Yellowstone A-Prime).